The following is a 233-amino-acid chain: Small ribosomal subunit protein uS2 (233 aa).

This sequence belongs to the universal ribosomal protein uS2 family.

The polypeptide is Small ribosomal subunit protein uS2 (Clostridium botulinum (strain Hall / ATCC 3502 / NCTC 13319 / Type A)).